Consider the following 459-residue polypeptide: Cyclooctatin synthase (459 aa).

C408 contacts heme.

The protein belongs to the cytochrome P450 family. Heme is required as a cofactor.

The catalysed reaction is cyclooctat-9-ene-5,7-diol + AH2 + O2 = cyclooctatin + A + H2O. Functionally, involved in the biosynthesis of cyclooctatin, a potent inhibitor of lysophospholipase. Catalyzes the hydroxylation of cyclooctat-9-ene-5,7-diol at C-18 to yield the final product, cyclooctatin. The chain is Cyclooctatin synthase from Streptomyces melanosporofaciens.